Reading from the N-terminus, the 1001-residue chain is uncharacterized protein (1001 aa).

The span at K939 to S948 shows a compositional bias: basic and acidic residues. The interval K939–N1001 is disordered. S948 and S950 each carry phosphoserine.

This is an uncharacterized protein from Schizosaccharomyces pombe (strain 972 / ATCC 24843) (Fission yeast).